The chain runs to 301 residues: Glycine--tRNA ligase alpha subunit (301 aa).

The protein belongs to the class-II aminoacyl-tRNA synthetase family. As to quaternary structure, tetramer of two alpha and two beta subunits.

The protein localises to the cytoplasm. The enzyme catalyses tRNA(Gly) + glycine + ATP = glycyl-tRNA(Gly) + AMP + diphosphate. The protein is Glycine--tRNA ligase alpha subunit of Pseudoalteromonas atlantica (strain T6c / ATCC BAA-1087).